Here is an 83-residue protein sequence, read N- to C-terminus: uncharacterized protein (83 aa).

The chain crosses the membrane as a helical span at residues 58–78; the sequence is AVLLWIAIIATLGNIVVVGVV.

The protein localises to the membrane. This is an uncharacterized protein from Homo sapiens (Human).